The chain runs to 440 residues: NADH-quinone oxidoreductase subunit D 2 (440 aa).

The protein belongs to the complex I 49 kDa subunit family. NDH-1 is composed of 14 different subunits. Subunits NuoB, C, D, E, F, and G constitute the peripheral sector of the complex.

The protein resides in the cell membrane. The catalysed reaction is a quinone + NADH + 5 H(+)(in) = a quinol + NAD(+) + 4 H(+)(out). Its function is as follows. NDH-1 shuttles electrons from NADH, via FMN and iron-sulfur (Fe-S) centers, to quinones in the respiratory chain. The immediate electron acceptor for the enzyme in this species is believed to be a menaquinone. Couples the redox reaction to proton translocation (for every two electrons transferred, four hydrogen ions are translocated across the cytoplasmic membrane), and thus conserves the redox energy in a proton gradient. This Streptomyces coelicolor (strain ATCC BAA-471 / A3(2) / M145) protein is NADH-quinone oxidoreductase subunit D 2.